Reading from the N-terminus, the 111-residue chain is Small ribosomal subunit protein bS6 (111 aa).

This sequence belongs to the bacterial ribosomal protein bS6 family.

Its function is as follows. Binds together with bS18 to 16S ribosomal RNA. The protein is Small ribosomal subunit protein bS6 of Francisella philomiragia subsp. philomiragia (strain ATCC 25017 / CCUG 19701 / FSC 153 / O#319-036).